We begin with the raw amino-acid sequence, 131 residues long: Holin-like protein CidA (131 aa).

4 helical membrane-spanning segments follow: residues 4 to 24 (VQLI…TYIG), 30 to 50 (IFHL…LLLQ), 65 to 85 (FLLK…MDVA), and 88 to 108 (ITLN…IVAL).

Belongs to the CidA/LrgA family. CidA subfamily.

Its subcellular location is the cell membrane. In terms of biological role, increases the activity of extracellular murein hydrolases possibly by mediating their export via hole formation. Inhibited by the antiholin-like proteins LrgAB. In an unstressed cell, the LrgAB products probably inhibit the function of the CidAB proteins. When a cell is stressed by the addition of antibiotics or by other factors in the environment, the CidAB proteins possibly oligomerize within the bacterial cell membrane, creating lesions that disrupt the proton motive force, which in turn results in loss of cell viability. These lesions are also hypothesized to regulate the subsequent cell lysis by either allowing the murein hydrolases access to the cell wall substrate and/or regulating their activity by a possible change in the cell wall pH that results from loss of membrane potential. The chain is Holin-like protein CidA from Staphylococcus aureus (strain Mu3 / ATCC 700698).